The following is a 644-amino-acid chain: Prolyl 3,4-dihydroxylase TPA1 (644 aa).

The Fe2OG dioxygenase domain maps to 141–247 (SKTDMSINTY…RLSIQGWYHI (107 aa)). Positions 159 and 161 each coordinate Fe cation. Tyr-173 serves as a coordination point for 2-oxoglutarate. Residue His-227 participates in Fe cation binding. Position 238 (Arg-238) interacts with 2-oxoglutarate. Ser-607 is subject to Phosphoserine.

This sequence belongs to the TPA1 family. In terms of assembly, monomer and homodimer. Interacts with FRK1, eRF1 (SUP1), eRF3 (SUP35) and polyadenylate-binding protein PAB1. Interacts with ETT1. Fe(2+) serves as cofactor. L-ascorbate is required as a cofactor.

Its subcellular location is the nucleus. The catalysed reaction is [ribosomal protein uS12]-L-proline + 2-oxoglutarate + O2 = [ribosomal protein uS12]-(3S)-3-hydroxy-L-proline + succinate + CO2. The enzyme catalyses [ribosomal protein uS12]-(3S)-3-hydroxy-L-proline + 2-oxoglutarate + O2 = [ribosomal protein uS12]-(3S)-3,4-dihydroxy-L-proline + succinate + CO2. Prolyl 3,4-dihydroxylase that catalyzes 3,4-dihydroxylation of 'Pro-64' of small ribosomal subunit uS12 (RPS23A and RPS23B), thereby regulating protein translation termination efficiency. Part of a messenger ribonucleoprotein (mRNP) complex at the 3'-UTR of mRNAs. It associates specifically with components of the translation termination complex and is involved in both translation termination and in regulation of normal mRNA decay through translation termination-coupled poly(A) shortening. This chain is Prolyl 3,4-dihydroxylase TPA1, found in Saccharomyces cerevisiae (strain ATCC 204508 / S288c) (Baker's yeast).